Here is a 186-residue protein sequence, read N- to C-terminus: Tegument protein UL55 (186 aa).

This sequence belongs to the alphaherpesvirinae HHV-1 UL55 family.

The protein localises to the virion tegument. It localises to the host nucleus matrix. This chain is Tegument protein UL55, found in Human herpesvirus 2 (strain HG52) (HHV-2).